Here is a 1004-residue protein sequence, read N- to C-terminus: Ephrin type-B receptor 2 (1004 aa).

Positions 1-19 (MGPLWFCCLPLALLPLLAA) are cleaved as a signal peptide. Residues 20-544 (VEETLMDSTT…QTSVQEKLPL (525 aa)) are Extracellular-facing. Residues 21-203 (EETLMDSTTA…FYRKCPRVIQ (183 aa)) form the Eph LBD domain. Intrachain disulfides connect cysteine 63–cysteine 185 and cysteine 98–cysteine 108. Residues asparagine 266, asparagine 337, asparagine 429, asparagine 478, and asparagine 483 are each glycosylated (N-linked (GlcNAc...) asparagine). 2 consecutive Fibronectin type-III domains span residues 325-435 (IPSA…TNQA) and 436-531 (APSA…TMTE). The chain crosses the membrane as a helical span at residues 545 to 565 (IIGSSAAGLVFLIAVVVIIIV). Over 566-1004 (CNRRRGFERA…QMNQIQSVEV (439 aa)) the chain is Cytoplasmic. In terms of domain architecture, Protein kinase spans 639–902 (VKIEQVIGAG…QIVNTLDKMI (264 aa)). ATP-binding positions include 645–653 (IGAGEFGEV) and lysine 671. Aspartate 764 functions as the Proton acceptor in the catalytic mechanism. One can recognise an SAM domain in the interval 931–995 (TSFNTVDEWL…LNSIQVMRAQ (65 aa)). A PDZ-binding motif is present at residues 1002-1004 (VEV).

The protein belongs to the protein kinase superfamily. Tyr protein kinase family. Ephrin receptor subfamily. Heterotetramer upon binding of the ligand. The heterotetramer is composed of an ephrin dimer and a receptor dimer. Oligomerization is probably required to induce biological responses. Ligand binding induces cleavage by matrix metalloproteinases (MMPs) such as MMP7/MMP9, producing an EphB2/N-terminal fragment (NTF) and a C-terminal long fragment (EphB2-LF). EphB2-LF is further cleaved by MMPs, producing EphB2/CTF1 which is further cleaved by the PS1/gamma-secretase producing EphB2/CTF2. Wide tissue distribution throughout development and sustained expression in adult brain. The longer form (CEK5+) is specifically expressed in the central nervous system.

It is found in the cell membrane. The protein localises to the cell projection. It localises to the axon. Its subcellular location is the dendrite. The catalysed reaction is L-tyrosyl-[protein] + ATP = O-phospho-L-tyrosyl-[protein] + ADP + H(+). In terms of biological role, receptor tyrosine kinase which binds promiscuously transmembrane ephrin-B family ligands residing on adjacent cells, leading to contact-dependent bidirectional signaling into neighboring cells. The signaling pathway downstream of the receptor is referred to as forward signaling while the signaling pathway downstream of the ephrin ligand is referred to as reverse signaling. Functions in axon guidance during development. In addition to axon guidance, also regulates dendritic spines development and maturation and stimulates the formation of excitatory synapses. This is Ephrin type-B receptor 2 (EPHB2) from Gallus gallus (Chicken).